We begin with the raw amino-acid sequence, 236 residues long: LHFPL tetraspan subfamily member 3 protein (236 aa).

4 helical membrane passes run 36–56 (IGVL…VCFI), 110–130 (FFIG…TLFF), 140–160 (ICAW…MIFP), and 191–211 (ILAI…FVLG).

The protein belongs to the LHFP family.

Its subcellular location is the membrane. This is LHFPL tetraspan subfamily member 3 protein from Homo sapiens (Human).